A 1889-amino-acid polypeptide reads, in one-letter code: Bromodomain adjacent to zinc finger domain protein 2A (1889 aa).

3 disordered regions span residues 1-59 (MEME…NGLS), 384-433 (FGLN…SPAA), and 479-526 (TTPV…GAVA). The segment covering 35 to 59 (TNGSPMNFPQQGKSLNGDVNVNGLS) has biased composition (polar residues). Residues 332–726 (EGNPVISALD…ESQTPVQGQA (395 aa)) are required for TTF1 binding. The span at 423–433 (PAVSPTASPAA) shows a compositional bias: low complexity. Polar residues-rich tracts occupy residues 479–489 (TTPVTSPQGSP) and 498–509 (QTVSPARKNVSS). Phosphothreonine is present on threonine 499. Serine 501 is modified (phosphoserine). Positions 538 to 609 (IATPEEVRLP…EHFSFSPRMP (72 aa)) constitute an MBD domain. Threonine 540 is subject to Phosphothreonine. Serine 605 bears the Phosphoserine mark. The segment at 638 to 791 (QAITGKRGRP…ARPSCRADKT (154 aa)) is disordered. 2 consecutive DNA-binding regions (a.T hook) follow at residues 641 to 653 (TGKR…NEKA) and 662 to 674 (KRGR…IKMP). A compositionally biased stretch (basic and acidic residues) spans 648-660 (RNNEKAKNKEVPK). Basic residues predominate over residues 661-670 (VKRGRGRPPK). Lysine 672 is subject to N6-acetyllysine; by KAT8. The segment covering 678-701 (NKTDNRLPKKLETQEILSEDDKAK) has biased composition (basic and acidic residues). Positions 686-813 (KKLETQEILS…QQAILEEMKK (128 aa)) form a coiled coil. Residues 702 to 713 (MTKNKKKMRQKV) are compositionally biased toward basic residues. The span at 716 to 726 (GESQTPVQGQA) shows a compositional bias: polar residues. Basic and acidic residues-rich tracts occupy residues 731–740 (KQDTKSLKQK) and 748–791 (AEKE…ADKT). Residue lysine 790 is modified to N6-acetyllysine. The DDT domain occupies 839–904 (SRAFSDCLTI…LKAALHDPGL (66 aa)). Lysine 857 participates in a covalent cross-link: Glycyl lysine isopeptide (Lys-Gly) (interchain with G-Cter in SUMO2). A disordered region spans residues 1039–1063 (EETSGIEEEEEEENTTAVHGRRGRK). Residue serine 1042 is modified to Phosphoserine. Positions 1042–1052 (SGIEEEEEEEN) are enriched in acidic residues. Residues lysine 1141 and lysine 1163 each participate in a glycyl lysine isopeptide (Lys-Gly) (interchain with G-Cter in SUMO2) cross-link. 2 disordered regions span residues 1147-1247 (LMEV…GQSQ) and 1269-1397 (LSSS…GRPP). Serine 1174 carries the phosphoserine modification. The a.T hook 3 DNA-binding region spans 1176-1188 (ARSRGRPRKPKPG). Composition is skewed to polar residues over residues 1190–1231 (LQPQ…QPSS), 1269–1278 (LSSSVLTPDS), and 1331–1346 (DQPT…SKPM). Serine 1374, serine 1377, and serine 1383 each carry phosphoserine. Residues 1390 to 1402 (PKRRGRPPSKFFK) constitute a DNA-binding region (a.T hook 4). Serine 1545 bears the Phosphoserine mark. Residues lysine 1662 and lysine 1695 each participate in a glycyl lysine isopeptide (Lys-Gly) (interchain with G-Cter in SUMO2) cross-link. The PHD-type zinc-finger motif lies at 1662–1712 (KVTCLVCRKGDNDEFLLLCDGCDRGCHIYCHRPKMEAVPEGDWFCAVCLSQ). The interval 1720-1778 (QRPGFPKRGQKRKSSFPLTFPEGDSRRRMLSRSRDSPAVPRYPEDGLSPPKRRRHSMRS) is disordered. At serine 1733 the chain carries Phosphoserine. A Phosphothreonine modification is found at threonine 1738. Positions 1742–1754 (GDSRRRMLSRSRD) are enriched in basic and acidic residues. Residues serine 1755 and serine 1767 each carry the phosphoserine modification. Over residues 1769-1778 (PKRRRHSMRS) the composition is skewed to basic residues. The region spanning 1777 to 1881 (RSHHSDLTFC…RFFESRWEEF (105 aa)) is the Bromo domain.

This sequence belongs to the WAL family. In terms of assembly, component of the NoRC-1 ISWI chromatin remodeling complex at least composed of SMARCA1 and BAZ2A/TIP5, which regulates the spacing of histone octamers on the DNA template to facilitate access to DNA. Within the NoRC-1 ISWI chromatin remodeling complex interacts with SMARCA1; the interaction is direct. Component of the NoRC-5 ISWI chromatin remodeling complex (also called the NoRC nucleolar-remodeling complex), at least composed of SMARCA5/SNF2H and BAZ2A/TIP5, which regulates the spacing of histone octamers on the DNA template to facilitate access to DNA. Within the NoRC-5 ISWI chromatin remodeling complexes interacts with SMARCA5/SNF2H; the interaction is direct. Interacts with TTF1; the interaction is required for recruitment of the NoRC-5 ISWI chromatin remodeling complex to rDNA. Interacts with HDAC1. Interacts with SIN3A. Interacts with DNMT1 and DNM3B. Interacts with BEND3 and USP21. In terms of processing, ubiquitinated. Deubiquitinated by USP21 leading to its stabilization. Acetylation at Lys-672 by KAT8/MOF promotes its dissociation from pRNA, affecting heterochromatin formation, nucleosome positioning and rDNA silencing. Deacetylation by SIRT1 in late S phase enhances pRNA-binding, allowing de novo DNA methylation and heterochromatin formation. Acetylation is high during S phase and declines to background levels in late S phase when the silent copies of rRNA genes are replicated.

It is found in the nucleus. Its subcellular location is the nucleolus. Regulatory subunit of the ATP-dependent NoRC-1 and NoRC-5 ISWI chromatin remodeling complexes, which form ordered nucleosome arrays on chromatin and facilitate access to DNA during DNA-templated processes such as DNA replication, transcription, and repair. Both complexes regulate the spacing of nucleosomes along the chromatin and have the ability to slide mononucleosomes to the center of a DNA template. Directly stimulates the ATPase activity of SMARCA5 in the NoRC-5 ISWI chromatin remodeling complex. The NoRC-1 ISWI chromatin remodeling complex has a lower ATP hydrolysis rate than the NoRC-5 ISWI chromatin remodeling complex. Within the NoRC-5 ISWI chromatin remodeling complex, mediates silencing of a fraction of rDNA by recruiting histone-modifying enzymes and DNA methyltransferases, leading to heterochromatin formation and transcriptional silencing. In the complex, it plays a central role by being recruited to rDNA and by targeting chromatin modifying enzymes such as HDAC1, leading to repress RNA polymerase I transcription. Recruited to rDNA via its interaction with TTF1 and its ability to recognize and bind histone H4 acetylated on 'Lys-16' (H4K16ac), leading to deacetylation of H4K5ac, H4K8ac, H4K12ac but not H4K16ac. Specifically binds pRNAs, 150-250 nucleotide RNAs that are complementary in sequence to the rDNA promoter; pRNA-binding is required for heterochromatin formation and rDNA silencing. This chain is Bromodomain adjacent to zinc finger domain protein 2A (Baz2a), found in Mus musculus (Mouse).